The primary structure comprises 606 residues: Acetylcholinesterase (606 aa).

Positions 1–28 (MPSCQPGKMPAPWPWWLQLLLCIPSCVA) are cleaved as a signal peptide. Cysteine 98 and cysteine 125 are joined by a disulfide. The active-site Acyl-ester intermediate is the serine 231. Residues cysteine 285 and cysteine 296 are joined by a disulfide bond. Residue asparagine 289 is glycosylated (N-linked (GlcNAc...) asparagine). Glutamate 358 (charge relay system) is an active-site residue. N-linked (GlcNAc...) asparagine glycosylation occurs at asparagine 374. A disulfide bridge links cysteine 433 with cysteine 552. Histidine 471 serves as the catalytic Charge relay system. Residue asparagine 484 is glycosylated (N-linked (GlcNAc...) asparagine).

This sequence belongs to the type-B carboxylesterase/lipase family. As to quaternary structure, isoform S is monomeric. Isoform T can form oligomers, including collagen-tailed forms. In terms of processing, the N-terminus is blocked. As to expression, liver and muscle contain both isoform T and isoform S. Venom gland predominantly contains isoform S.

It localises to the synapse. Its subcellular location is the secreted. The protein localises to the cell membrane. The enzyme catalyses acetylcholine + H2O = choline + acetate + H(+). Its activity is regulated as follows. Inhibited by active site inhibitors: edrophonium, trimethyl-(m-acetamidopheny1)-ammonium iodide, and trimethyl-(p-acetarnidopheny1)-ammonium iodide. Inhibited by both active and peripheral site inhibitors: decamethonium, and BW284c51. Inhibited by peripheral site inhibitors: snake acetylcholinesterase fasciculin-2, propidium, gallamine, D-tubocurarine, and tacrine. Also inhibited by antibodies Elec410 and Fab410. Functionally, in muscle, it terminates signal transduction at the neuromuscular junction by rapid hydrolysis of the acetylcholine released into the synaptic cleft. In liver, its function is unclear: it could serve as a safeguard against any diffusion of acetylcholine from synapses into the circulation. In venom, its toxic role is unclear: it could result in less musculatory control by rapidly hydrolyzing acetylcholine, or that it works synergistically with alkaline phosphatase (ALP) in paralyzing prey through hypotension. This Bungarus fasciatus (Banded krait) protein is Acetylcholinesterase (ACHE).